The chain runs to 136 residues: Phosphoribosyl-AMP cyclohydrolase (136 aa).

Mg(2+) is bound at residue D89. C90 is a Zn(2+) binding site. Mg(2+)-binding residues include D91 and D93. 2 residues coordinate Zn(2+): C106 and C113.

Belongs to the PRA-CH family. Homodimer. The cofactor is Mg(2+). Zn(2+) serves as cofactor.

The protein localises to the cytoplasm. It carries out the reaction 1-(5-phospho-beta-D-ribosyl)-5'-AMP + H2O = 1-(5-phospho-beta-D-ribosyl)-5-[(5-phospho-beta-D-ribosylamino)methylideneamino]imidazole-4-carboxamide. The protein operates within amino-acid biosynthesis; L-histidine biosynthesis; L-histidine from 5-phospho-alpha-D-ribose 1-diphosphate: step 3/9. Its function is as follows. Catalyzes the hydrolysis of the adenine ring of phosphoribosyl-AMP. This chain is Phosphoribosyl-AMP cyclohydrolase, found in Bifidobacterium longum subsp. infantis (strain ATCC 15697 / DSM 20088 / JCM 1222 / NCTC 11817 / S12).